A 236-amino-acid chain; its full sequence is Class B acid phosphatase (236 aa).

An N-terminal signal peptide occupies residues 1-22; that stretch reads MKNVMKLSVIALLTAAAVPAMA. Asp-67 serves as the catalytic Nucleophile. Positions 67 and 69 each coordinate Mg(2+). Asp-69 acts as the Proton donor in catalysis. Substrate-binding positions include 136–137 and Lys-176; that span reads TG. Asp-191 is a Mg(2+) binding site.

This sequence belongs to the class B bacterial acid phosphatase family. As to quaternary structure, homotetramer. Mg(2+) is required as a cofactor.

The protein localises to the periplasm. The catalysed reaction is a phosphate monoester + H2O = an alcohol + phosphate. In terms of biological role, dephosphorylates several organic phosphate monoesters. Also has a phosphotransferase activity catalyzing the transfer of low-energy phosphate groups from organic phosphate monoesters to free hydroxyl groups of various organic compounds. The sequence is that of Class B acid phosphatase (aphA) from Haemophilus influenzae (strain ATCC 51907 / DSM 11121 / KW20 / Rd).